A 620-amino-acid chain; its full sequence is MFEIAKGISNSLAKKSVGAKVDGKNVDMSYILDHDAEVEFIDIDSPEGEDIVRHSTAHLMAQAVLRLYPDTKVTIGPVIENGFYYDFDPVEQFTEEDLEKIEAEMKRIVKENIKLEKYVLPRDEAIEYFRDVDKNKYKVEVVEGIPQGEQVSFYKQGDFTDLCRGTHVPSTGYLKAFKLRTVAGAYWRGNSKNKMLQRIYGYSFSNEERLKHHLKLMEEAEKRDHRKLGKELELFFLSEYGPGFPFFLPKGMIVRNVLIDLWRREHEKAGYQQLETPIMLNKELWEISGHWFNYRENMYTSEIDELEFAIKPMNCPGGVLAFKHQLHSYKDLPARLAELGRVHRHEFSGALHGLMRVRSFTQDDSHIFMTPDQVQDEIIGVVNLIDKFYSKLFGFEYEIELSTKPEKAIGSQEIWDMAEAALAGALDKLGRKYKINPGDGAFYGPKLDFKIKDAIGRMWQCGTIQLDFNLPERFDVTYIGEDGEKHRPVMLHRVIYGSIERFIGILIEHYAGAFPMWLAPVQVKVLTLNDECIPYAKEIMNKLEELGIRAELDDRNETIGYKIREANGKYKIPMQLIIGKNEVENKEVNIRRFGSKDQFSKLLDEFYTYVVDEATIKFDK.

Residues Met1–Asp42 enclose the TGS domain. Residues Asp224 to Pro515 are catalytic. Positions 315, 366, and 492 each coordinate Zn(2+).

This sequence belongs to the class-II aminoacyl-tRNA synthetase family. As to quaternary structure, homodimer. Requires Zn(2+) as cofactor.

Its subcellular location is the cytoplasm. It carries out the reaction tRNA(Thr) + L-threonine + ATP = L-threonyl-tRNA(Thr) + AMP + diphosphate + H(+). Its function is as follows. Catalyzes the attachment of threonine to tRNA(Thr) in a two-step reaction: L-threonine is first activated by ATP to form Thr-AMP and then transferred to the acceptor end of tRNA(Thr). Also edits incorrectly charged L-seryl-tRNA(Thr). The polypeptide is Threonine--tRNA ligase (Fusobacterium nucleatum subsp. nucleatum (strain ATCC 25586 / DSM 15643 / BCRC 10681 / CIP 101130 / JCM 8532 / KCTC 2640 / LMG 13131 / VPI 4355)).